A 201-amino-acid polypeptide reads, in one-letter code: Recombination protein RecR (201 aa).

Residues 60–75 (CQICGNIDTRDPCTIC) form a C4-type zinc finger. One can recognise a Toprim domain in the interval 83 to 178 (TLLVVVETVA…KITRLAHGVP (96 aa)).

The protein belongs to the RecR family.

Its function is as follows. May play a role in DNA repair. It seems to be involved in an RecBC-independent recombinational process of DNA repair. It may act with RecF and RecO. In Beijerinckia indica subsp. indica (strain ATCC 9039 / DSM 1715 / NCIMB 8712), this protein is Recombination protein RecR.